We begin with the raw amino-acid sequence, 369 residues long: Phenylalanine--tRNA ligase alpha subunit (369 aa).

Glu270 lines the Mg(2+) pocket.

It belongs to the class-II aminoacyl-tRNA synthetase family. Phe-tRNA synthetase alpha subunit type 1 subfamily. As to quaternary structure, tetramer of two alpha and two beta subunits. It depends on Mg(2+) as a cofactor.

It is found in the cytoplasm. It carries out the reaction tRNA(Phe) + L-phenylalanine + ATP = L-phenylalanyl-tRNA(Phe) + AMP + diphosphate + H(+). This is Phenylalanine--tRNA ligase alpha subunit from Phenylobacterium zucineum (strain HLK1).